We begin with the raw amino-acid sequence, 166 residues long: Small ribosomal subunit protein uS5 (166 aa).

Positions Leu11–Val74 constitute an S5 DRBM domain.

The protein belongs to the universal ribosomal protein uS5 family. As to quaternary structure, part of the 30S ribosomal subunit. Contacts proteins S4 and S8.

Its function is as follows. With S4 and S12 plays an important role in translational accuracy. Located at the back of the 30S subunit body where it stabilizes the conformation of the head with respect to the body. This Idiomarina loihiensis (strain ATCC BAA-735 / DSM 15497 / L2-TR) protein is Small ribosomal subunit protein uS5.